A 262-amino-acid chain; its full sequence is Nodulation protein J (262 aa).

Residues 33-259 (ASLLGNLADP…FASIALFRRR (227 aa)) enclose the ABC transmembrane type-2 domain. 7 consecutive transmembrane segments (helical) span residues 37–57 (GNLADPITNLFGLGFGLGLIV), 64–84 (SYIAFLAAGMVAISAMTSATF), 102–122 (GILFTQLTLGDIVLGELVWAA), 125–145 (SVLAGTAIGIVAATLGYASWT), 149–169 (CAIPTIALTGLVFASLAMVVI), 177–197 (YFVFYQSLVLTPMVFLCGAVF), and 236–256 (LHVGALCVYAVLPFFASIALF).

The protein belongs to the ABC-2 integral membrane protein family. Lipooligosaccharide exporter (TC 3.A.1.102) subfamily. In terms of assembly, the complex is composed of two ATP-binding proteins (NodI) and two transmembrane proteins (NodJ).

It localises to the cell inner membrane. Part of the ABC transporter complex NodIJ involved in the export of the nodulation factors (Nod factors), the bacterial signal molecules that induce symbiosis and subsequent nodulation induction. Nod factors are LCO (lipo-chitin oligosaccharide), a modified beta-1,4-linked N-acetylglucosamine oligosaccharide. This subunit encodes the transporter. The sequence is that of Nodulation protein J (nodJ) from Bradyrhizobium diazoefficiens (strain JCM 10833 / BCRC 13528 / IAM 13628 / NBRC 14792 / USDA 110).